We begin with the raw amino-acid sequence, 386 residues long: uncharacterized protein (386 aa).

9 helical membrane passes run 48–68, 78–98, 136–156, 171–191, 213–233, 253–273, 285–305, 316–336, and 344–364; these read NLITLIGLGFVVINILTMLVY, PSWVYASWAIGLFLYQSFDAI, LQLDMFSSILTQFASLLYFYI, YFSGPVEGIVMVIGLFALTAI, FLPYYTYGSCLYNFMAFALLL, VIKALSGILPYFLQWMAVFSL, FLTIFCLNAFIFAYSVGVVIV, WNVLILPFLVDAVDAYTFGVL, and FFCYVGICIGVYGNFVAHVIA.

This sequence belongs to the CDP-alcohol phosphatidyltransferase class-I family.

It is found in the membrane. This is an uncharacterized protein from Schizosaccharomyces pombe (strain 972 / ATCC 24843) (Fission yeast).